A 293-amino-acid chain; its full sequence is Putative ribose uptake protein RbsU (293 aa).

10 helical membrane passes run 5–24 (AILI…TIAS), 34–51 (IFGA…LALF), 58–80 (GGMA…IITF), 95–114 (TTAF…LGNW), 121–138 (IIGF…RMTV), 153–170 (SAVI…IYSA), 177–199 (IGGF…IYAL), 212–234 (VSWQ…LISA), 241–263 (LATG…IFFL), and 273–292 (MITI…TVFI).

It belongs to the GRP transporter (TC 2.A.7.5) family.

The protein localises to the cell membrane. Functionally, could be involved in the uptake of ribose. This chain is Putative ribose uptake protein RbsU (rbsU), found in Staphylococcus epidermidis (strain ATCC 35984 / DSM 28319 / BCRC 17069 / CCUG 31568 / BM 3577 / RP62A).